The primary structure comprises 454 residues: Tol-Pal system protein TolB (454 aa).

The first 30 residues, 1-30, serve as a signal peptide directing secretion; that stretch reads MNDARSITRRRFMTLTGSGLAMLGGGHAFA.

This sequence belongs to the TolB family. In terms of assembly, the Tol-Pal system is composed of five core proteins: the inner membrane proteins TolA, TolQ and TolR, the periplasmic protein TolB and the outer membrane protein Pal. They form a network linking the inner and outer membranes and the peptidoglycan layer.

The protein localises to the periplasm. Part of the Tol-Pal system, which plays a role in outer membrane invagination during cell division and is important for maintaining outer membrane integrity. In Bradyrhizobium diazoefficiens (strain JCM 10833 / BCRC 13528 / IAM 13628 / NBRC 14792 / USDA 110), this protein is Tol-Pal system protein TolB.